The primary structure comprises 296 residues: METSQPHNAESMSQDLSELLKEATKEVHEQAENTPFMKNFQKGQVSLHEFKLVTASLYFIYSALEEEIERNKDNPVYAPVYFPMELHRKAALEKDLEYFYGSNWRAEIPCPEATQKYVERLHVVGKKHPELLVAHAYTRYLGDLSGGQVLKKIAQKALQLPSTGEGLAFFTFDGVSNATKFKQLYRSRMNALEMDHATKKRVLEEAKKAFLLNIQVFEALQKLVSKSQENGHAVQPKAELRTRSVNKSHENSPAAGKESERTSRMQADMLTTSPLVRWLLALGFIATTVAVGLFAM.

The Cytoplasmic portion of the chain corresponds to 1–273 (METSQPHNAE…RMQADMLTTS (273 aa)). Positions 21, 28, 137, and 186 each coordinate heme b. Residues 231 to 264 (GHAVQPKAELRTRSVNKSHENSPAAGKESERTSR) form a disordered region. Over residues 238–250 (AELRTRSVNKSHE) the composition is skewed to basic and acidic residues. Residues 274 to 296 (PLVRWLLALGFIATTVAVGLFAM) traverse the membrane as a helical; Anchor for type IV membrane protein segment.

This sequence belongs to the heme oxygenase family. As to quaternary structure, homodimer and higher order homooligomer. Oligomerization is crucial for its stability and function in the endoplasmic reticulum. A soluble form arises by proteolytic removal of the membrane anchor.

Its subcellular location is the endoplasmic reticulum membrane. It catalyses the reaction heme b + 3 reduced [NADPH--hemoprotein reductase] + 3 O2 = biliverdin IXalpha + CO + Fe(2+) + 3 oxidized [NADPH--hemoprotein reductase] + 3 H2O + H(+). Inhibited by metalloporphyrins in the following order of decreasing potency: tin mesoporphyrin &gt; tin protoporphyrin &gt; zinc protoporphyrin &gt; manganese protoporphyrin &gt; cobalt protoporphyrin. Its function is as follows. Catalyzes the oxidative cleavage of heme at the alpha-methene bridge carbon, released as carbon monoxide (CO), to generate biliverdin IXalpha, while releasing the central heme iron chelate as ferrous iron. Affords protection against programmed cell death and this cytoprotective effect relies on its ability to catabolize free heme and prevent it from sensitizing cells to undergo apoptosis. In terms of biological role, catalyzes the oxidative cleavage of heme at the alpha-methene bridge carbon, released as carbon monoxide (CO), to generate biliverdin IXalpha, while releasing the central heme iron chelate as ferrous iron. In Gallus gallus (Chicken), this protein is Heme oxygenase 1 (HMOX1).